Here is a 415-residue protein sequence, read N- to C-terminus: F-box protein ETP1 (415 aa).

Residues 1–46 enclose the F-box domain; it reads MTIPDLCNDLVDEILCRVPARNLKRLRSTSKRWNRLFKDDRRFARE.

In terms of assembly, interacts with EIN2 (via C-terminus).

Negative regulator of EIN2 protein stability. This chain is F-box protein ETP1, found in Arabidopsis thaliana (Mouse-ear cress).